Here is a 217-residue protein sequence, read N- to C-terminus: Adenylate kinase (217 aa).

10 to 15 (GAGKGT) is a binding site for ATP. The NMP stretch occupies residues 30–59 (STGDMFRAAMKEETPLGLEAKSYIDKGELV). AMP contacts are provided by residues Thr-31, Arg-36, 57–59 (ELV), 85–88 (GFPR), and Gln-92. The segment at 126–163 (GRRICSVCGTTYHLVFNPPKTPGICDKDGGELYQRADD) is LID. Residue Arg-127 coordinates ATP. Cys-130 and Cys-133 together coordinate Zn(2+). 136-137 (TY) serves as a coordination point for ATP. The Zn(2+) site is built by Cys-150 and Asp-153. The AMP site is built by Arg-160 and Arg-171. Gln-199 is a binding site for ATP.

The protein belongs to the adenylate kinase family. Monomer.

It is found in the cytoplasm. The enzyme catalyses AMP + ATP = 2 ADP. Its pathway is purine metabolism; AMP biosynthesis via salvage pathway; AMP from ADP: step 1/1. Its function is as follows. Catalyzes the reversible transfer of the terminal phosphate group between ATP and AMP. Plays an important role in cellular energy homeostasis and in adenine nucleotide metabolism. The chain is Adenylate kinase from Bacillus subtilis (strain 168).